An 852-amino-acid polypeptide reads, in one-letter code: Lon protease homolog 2, peroxisomal (852 aa).

Serine 2 is modified (N-acetylserine). Positions 13–222 constitute a Lon N-terminal domain; that stretch reads LPLLLTHESV…MTIPLLVRQI (210 aa). Residue 375 to 382 participates in ATP binding; that stretch reads GPPGVGKT. The 187-residue stretch at 651-837 folds into the Lon proteolytic domain; it reads LSQPGVAIGL…DEVLNAAFDG (187 aa). Catalysis depends on residues serine 743 and lysine 786. The Microbody targeting signal signature appears at 850–852; the sequence is SKL.

This sequence belongs to the peptidase S16 family. Interacts with PEX5. Interacts with TYSND1. May interact with enzymes involved in beta-oxidation of fatty acids, including ACOX1/AOX.

The protein localises to the peroxisome matrix. It catalyses the reaction Hydrolysis of proteins in presence of ATP.. Functionally, ATP-dependent serine protease that mediates the selective degradation of misfolded and unassembled polypeptides in the peroxisomal matrix. Necessary for type 2 peroxisome targeting signal (PTS2)-containing protein processing and facilitates peroxisome matrix protein import. May indirectly regulate peroxisomal fatty acid beta-oxidation through degradation of the self-processed forms of TYSND1. The protein is Lon protease homolog 2, peroxisomal (Lonp2) of Mus musculus (Mouse).